We begin with the raw amino-acid sequence, 82 residues long: Small ribosomal subunit protein bS20 (82 aa).

This sequence belongs to the bacterial ribosomal protein bS20 family.

Binds directly to 16S ribosomal RNA. This chain is Small ribosomal subunit protein bS20, found in Streptococcus suis (strain 98HAH33).